We begin with the raw amino-acid sequence, 299 residues long: GTPase Era (299 aa).

Residues 5-172 (KSGFVSIIGR…IDVLKTYLPE (168 aa)) enclose the Era-type G domain. The segment at 13 to 20 (GRPNVGKS) is G1. 13-20 (GRPNVGKS) is a binding site for GTP. Residues 39-43 (QTTRN) are G2. Positions 60–63 (DTPG) are G3. Residues 60 to 64 (DTPGI) and 122 to 125 (NKID) each bind GTP. Residues 122 to 125 (NKID) are G4. The interval 151–153 (ISA) is G5. The KH type-2 domain occupies 203-280 (TSEEIPHAIG…YLELWVKVQK (78 aa)).

The protein belongs to the TRAFAC class TrmE-Era-EngA-EngB-Septin-like GTPase superfamily. Era GTPase family. In terms of assembly, monomer.

The protein resides in the cytoplasm. Its subcellular location is the cell membrane. Its function is as follows. An essential GTPase that binds both GDP and GTP, with rapid nucleotide exchange. Plays a role in 16S rRNA processing and 30S ribosomal subunit biogenesis and possibly also in cell cycle regulation and energy metabolism. This Staphylococcus haemolyticus (strain JCSC1435) protein is GTPase Era.